Here is a 367-residue protein sequence, read N- to C-terminus: Riboflavin biosynthesis protein RibD (367 aa).

The 123-residue stretch at 1–123 (MQDEYYMARA…RLQQAGIDVS (123 aa)) folds into the CMP/dCMP-type deaminase domain. The tract at residues 1-145 (MQDEYYMARA…KGFLKRMRTG (145 aa)) is deaminase. Residue His-50 participates in Zn(2+) binding. The Proton donor role is filled by Glu-52. 2 residues coordinate Zn(2+): Cys-75 and Cys-84. Positions 146–367 (FPYIQLKLGA…PDVCLHLVGA (222 aa)) are reductase. 161–164 (TAMA) lines the NADP(+) pocket. Ser-168 serves as a coordination point for substrate. Trp-170 serves as a coordination point for NADP(+). Residue Arg-184 participates in substrate binding. 2 residues coordinate NADP(+): Thr-196 and Asp-200. Substrate is bound by residues Leu-204 and Arg-207. An NADP(+)-binding site is contributed by Ser-234. Position 299 (Glu-299) interacts with substrate. Position 301–304 (301–304 (GPTL)) interacts with NADP(+).

It in the N-terminal section; belongs to the cytidine and deoxycytidylate deaminase family. This sequence in the C-terminal section; belongs to the HTP reductase family. As to quaternary structure, homodimer. Zn(2+) serves as cofactor.

The enzyme catalyses 2,5-diamino-6-hydroxy-4-(5-phosphoribosylamino)-pyrimidine + H2O + H(+) = 5-amino-6-(5-phospho-D-ribosylamino)uracil + NH4(+). It carries out the reaction 5-amino-6-(5-phospho-D-ribitylamino)uracil + NADP(+) = 5-amino-6-(5-phospho-D-ribosylamino)uracil + NADPH + H(+). The protein operates within cofactor biosynthesis; riboflavin biosynthesis; 5-amino-6-(D-ribitylamino)uracil from GTP: step 2/4. It functions in the pathway cofactor biosynthesis; riboflavin biosynthesis; 5-amino-6-(D-ribitylamino)uracil from GTP: step 3/4. Functionally, converts 2,5-diamino-6-(ribosylamino)-4(3h)-pyrimidinone 5'-phosphate into 5-amino-6-(ribosylamino)-2,4(1h,3h)-pyrimidinedione 5'-phosphate. This Escherichia coli (strain K12) protein is Riboflavin biosynthesis protein RibD (ribD).